Reading from the N-terminus, the 454-residue chain is tRNA-2-methylthio-N(6)-dimethylallyladenosine synthase (454 aa).

Residues 6–122 form the MTTase N-terminal domain; that stretch reads RRYHITTYGC…LQDLLEQVAS (117 aa). Residues C15, C51, C85, C157, C161, and C164 each contribute to the [4Fe-4S] cluster site. A Radical SAM core domain is found at 143–384; it reads RDSAVTAWVN…GVCAELRSQR (242 aa). The 65-residue stretch at 383–447 folds into the TRAM domain; it reads QRYANRIEEV…SFSLTGEPLS (65 aa).

Belongs to the methylthiotransferase family. MiaB subfamily. Monomer. Requires [4Fe-4S] cluster as cofactor.

The protein localises to the cytoplasm. It carries out the reaction N(6)-dimethylallyladenosine(37) in tRNA + (sulfur carrier)-SH + AH2 + 2 S-adenosyl-L-methionine = 2-methylsulfanyl-N(6)-dimethylallyladenosine(37) in tRNA + (sulfur carrier)-H + 5'-deoxyadenosine + L-methionine + A + S-adenosyl-L-homocysteine + 2 H(+). Catalyzes the methylthiolation of N6-(dimethylallyl)adenosine (i(6)A), leading to the formation of 2-methylthio-N6-(dimethylallyl)adenosine (ms(2)i(6)A) at position 37 in tRNAs that read codons beginning with uridine. The sequence is that of tRNA-2-methylthio-N(6)-dimethylallyladenosine synthase from Acaryochloris marina (strain MBIC 11017).